Reading from the N-terminus, the 635-residue chain is Glutamyl-tRNA(Gln) amidotransferase subunit E (635 aa).

The interval 415 to 437 (LPDGNTEYMRPLPGKARMYPETD) is disordered.

The protein belongs to the GatB/GatE family. GatE subfamily. In terms of assembly, heterodimer of GatD and GatE.

The enzyme catalyses L-glutamyl-tRNA(Gln) + L-glutamine + ATP + H2O = L-glutaminyl-tRNA(Gln) + L-glutamate + ADP + phosphate + H(+). Functionally, allows the formation of correctly charged Gln-tRNA(Gln) through the transamidation of misacylated Glu-tRNA(Gln) in organisms which lack glutaminyl-tRNA synthetase. The reaction takes place in the presence of glutamine and ATP through an activated gamma-phospho-Glu-tRNA(Gln). The GatDE system is specific for glutamate and does not act on aspartate. The chain is Glutamyl-tRNA(Gln) amidotransferase subunit E from Pyrococcus horikoshii (strain ATCC 700860 / DSM 12428 / JCM 9974 / NBRC 100139 / OT-3).